The sequence spans 366 residues: Dual-specificity RNA methyltransferase RlmN (366 aa).

The active-site Proton acceptor is the glutamate 102. The Radical SAM core domain maps to 108–340 (DEGRNTLCVS…TTTRKTRGRD (233 aa)). An intrachain disulfide couples cysteine 115 to cysteine 345. Positions 122, 126, and 129 each coordinate [4Fe-4S] cluster. Residues 171–172 (GE), serine 203, 225–227 (SLH), and asparagine 302 each bind S-adenosyl-L-methionine. The active-site S-methylcysteine intermediate is cysteine 345.

This sequence belongs to the radical SAM superfamily. RlmN family. It depends on [4Fe-4S] cluster as a cofactor.

The protein resides in the cytoplasm. It carries out the reaction adenosine(2503) in 23S rRNA + 2 reduced [2Fe-2S]-[ferredoxin] + 2 S-adenosyl-L-methionine = 2-methyladenosine(2503) in 23S rRNA + 5'-deoxyadenosine + L-methionine + 2 oxidized [2Fe-2S]-[ferredoxin] + S-adenosyl-L-homocysteine. It catalyses the reaction adenosine(37) in tRNA + 2 reduced [2Fe-2S]-[ferredoxin] + 2 S-adenosyl-L-methionine = 2-methyladenosine(37) in tRNA + 5'-deoxyadenosine + L-methionine + 2 oxidized [2Fe-2S]-[ferredoxin] + S-adenosyl-L-homocysteine. Its function is as follows. Specifically methylates position 2 of adenine 2503 in 23S rRNA and position 2 of adenine 37 in tRNAs. m2A2503 modification seems to play a crucial role in the proofreading step occurring at the peptidyl transferase center and thus would serve to optimize ribosomal fidelity. The sequence is that of Dual-specificity RNA methyltransferase RlmN from Methylococcus capsulatus (strain ATCC 33009 / NCIMB 11132 / Bath).